Consider the following 241-residue polypeptide: Uracil-DNA glycosylase (241 aa).

The Proton acceptor role is filled by aspartate 71.

It belongs to the uracil-DNA glycosylase (UDG) superfamily. UNG family.

The protein localises to the cytoplasm. The enzyme catalyses Hydrolyzes single-stranded DNA or mismatched double-stranded DNA and polynucleotides, releasing free uracil.. Functionally, excises uracil residues from the DNA which can arise as a result of misincorporation of dUMP residues by DNA polymerase or due to deamination of cytosine. This is Uracil-DNA glycosylase from Xanthomonas axonopodis pv. citri (strain 306).